We begin with the raw amino-acid sequence, 234 residues long: Myelin protein zero-like protein 3 (234 aa).

An N-terminal signal peptide occupies residues 1–31; that stretch reads MQQSGVPGSRGCALCPLLGVLFFQGVYVIFS. An Ig-like V-type domain is found at 32–148; that stretch reads LEIKADAHVR…NIPATELTVT (117 aa). Topologically, residues 32–158 are extracellular; it reads LEIKADAHVR…ERGFGTMLSS (127 aa). Cys-52 and Cys-128 are oxidised to a cystine. Asn-123 carries N-linked (GlcNAc...) asparagine glycosylation. A helical transmembrane segment spans residues 159–179; that stretch reads VALLSILVFIPSTVVVILLLV. Over 180 to 234 the chain is Cytoplasmic; that stretch reads RMGRKSAGLKKRSKSGYKKSSIEVSDDTDQEGDDCMAKLCVRCAECVDSDYEETY.

The protein belongs to the myelin P0 protein family.

The protein resides in the membrane. In terms of biological role, mediates homophilic cell-cell adhesion. The polypeptide is Myelin protein zero-like protein 3 (MPZL3) (Bos taurus (Bovine)).